The primary structure comprises 134 residues: Phospholipase A2 (134 aa).

Ca(2+)-binding residues include Trp-8, Gly-10, and Gly-12. 5 disulfide bridges follow: Cys-9/Cys-31, Cys-30/Cys-70, Cys-37/Cys-63, Cys-61/Cys-95, and Cys-105/Cys-113. N-linked (GlcNAc...) asparagine glycosylation occurs at Asn-13. Residue His-34 is part of the active site. Ca(2+) is bound at residue Asp-35. Residue Asp-64 is part of the active site.

This sequence belongs to the phospholipase A2 family. Group III subfamily. Ca(2+) is required as a cofactor. Expressed by the venom gland.

It is found in the secreted. The enzyme catalyses a 1,2-diacyl-sn-glycero-3-phosphocholine + H2O = a 1-acyl-sn-glycero-3-phosphocholine + a fatty acid + H(+). Functionally, PLA2 catalyzes the calcium-dependent hydrolysis of the 2-acyl groups in 3-sn-phosphoglycerides. The polypeptide is Phospholipase A2 (Apis dorsata (Giant honeybee)).